A 479-amino-acid polypeptide reads, in one-letter code: U2 small nuclear ribonucleoprotein auxiliary factor 35 kDa subunit-related protein 1 (479 aa).

Positions Met1–Leu63 are disordered. The span at Ser20 to Arg37 shows a compositional bias: basic residues. The segment covering Gln50–Leu63 has biased composition (acidic residues). Residue Lys67 forms a Glycyl lysine isopeptide (Lys-Gly) (interchain with G-Cter in SUMO2) linkage. The C3H1-type 1 zinc-finger motif lies at Glu171–Pro199. The RRM domain occupies Pro203–Val309. A C3H1-type 2 zinc finger spans residues Arg311–Arg338. At Ser354 the chain carries Phosphoserine. Positions Asp356–Lys479 are disordered. Composition is skewed to basic and acidic residues over residues Asn365 to Tyr379 and Pro388 to Lys403. Ser389 carries the post-translational modification Phosphoserine. 2 stretches are compositionally biased toward basic residues: residues Lys404–Ser417 and Ser442–Arg451.

It is found in the nucleus. The chain is U2 small nuclear ribonucleoprotein auxiliary factor 35 kDa subunit-related protein 1 from Homo sapiens (Human).